Here is a 237-residue protein sequence, read N- to C-terminus: RNA polymerase sigma-28 factor (237 aa).

The propeptide occupies 1-19 (MSLFAAIGYMVREVFVFVS). The Polymerase core binding motif lies at 77–90 (DLISIGTIGLIKAI). The segment at residues 197-206 (QREIAKALGI) is a DNA-binding region (H-T-H motif).

The protein belongs to the sigma-70 factor family. In terms of processing, proteolytically cleaved in the N-terminus probably by a SpoIIGA homolog to yield the active peptide.

Sigma factors are initiation factors that promote the attachment of RNA polymerase to specific initiation sites and are then released. This sigma factor directs the transcription of crystal protein genes, a sporulation-regulated event. The protein is RNA polymerase sigma-28 factor (sigK) of Bacillus thuringiensis subsp. kurstaki.